The chain runs to 120 residues: NAD(P)H-quinone oxidoreductase subunit 3, chloroplastic (120 aa).

A run of 3 helical transmembrane segments spans residues 10-30 (FWVFLIISSLIPILAFLISGV), 64-84 (IFALVFVVFDVETVFLYPWAM), and 88-108 (VLGVSVFIEALVFVLILIVGS).

The protein belongs to the complex I subunit 3 family. NDH is composed of at least 16 different subunits, 5 of which are encoded in the nucleus.

Its subcellular location is the plastid. It is found in the chloroplast thylakoid membrane. The enzyme catalyses a plastoquinone + NADH + (n+1) H(+)(in) = a plastoquinol + NAD(+) + n H(+)(out). The catalysed reaction is a plastoquinone + NADPH + (n+1) H(+)(in) = a plastoquinol + NADP(+) + n H(+)(out). In terms of biological role, NDH shuttles electrons from NAD(P)H:plastoquinone, via FMN and iron-sulfur (Fe-S) centers, to quinones in the photosynthetic chain and possibly in a chloroplast respiratory chain. The immediate electron acceptor for the enzyme in this species is believed to be plastoquinone. Couples the redox reaction to proton translocation, and thus conserves the redox energy in a proton gradient. This chain is NAD(P)H-quinone oxidoreductase subunit 3, chloroplastic, found in Pelargonium hortorum (Common geranium).